We begin with the raw amino-acid sequence, 121 residues long: Fluoride-specific ion channel FluC 2 (121 aa).

4 consecutive transmembrane segments (helical) span residues tyrosine 3–leucine 23, serine 27–leucine 47, glycine 64–valine 84, and isoleucine 92–phenylalanine 112. Residues glycine 71 and threonine 74 each coordinate Na(+).

Belongs to the fluoride channel Fluc/FEX (TC 1.A.43) family.

The protein localises to the cell membrane. It catalyses the reaction fluoride(in) = fluoride(out). Na(+) is not transported, but it plays an essential structural role and its presence is essential for fluoride channel function. Fluoride-specific ion channel. Important for reducing fluoride concentration in the cell, thus reducing its toxicity. This chain is Fluoride-specific ion channel FluC 2, found in Staphylococcus haemolyticus (strain JCSC1435).